Reading from the N-terminus, the 484-residue chain is Calcium uniporter protein, mitochondrial (484 aa).

A mitochondrion-targeting transit peptide spans 1–33; it reads MGHVLGGTLLAANRLARPPAVVLGKPRVCCWRA. Residues 34–304 are Mitochondrial matrix-facing; it reads SPWPVIVSSA…CDLLAHKGAH (271 aa). Disordered regions lie at residues 59–104 and 188–227; these read ARYE…KGRL and YTGG…DTHW. The segment covering 61-82 has biased composition (basic and acidic residues); that stretch reads YEARGRSTTQRKVDDRPWHRES. A compositionally biased stretch (polar residues) spans 83–93; the sequence is SGSLPKSTSPD. The chain crosses the membrane as a helical span at residues 305–326; it reads ALAKGGFAALAAWWGIVYYVTF. Topologically, residues 327–334 are mitochondrial intermembrane; that stretch reads HTDMGWDL. The Selectivity filter signature appears at 332–340; it reads WDLVEPITY. The helical transmembrane segment at 335–355 threads the bilayer; the sequence is VEPITYLAGLASIMGGYLWFL. Position 336 (E336) interacts with Ca(2+). At 356–484 the chain is on the mitochondrial matrix side; it reads FISRDLSYKA…NEAAANVPGD (129 aa). Composition is skewed to basic and acidic residues over residues 426-435 and 452-462; these read KEVLEEEKGG and DHDHDHDHVSH. The segment at 426–484 is disordered; that stretch reads KEVLEEEKGGKARKREQEDEDGDGDDDHDHDHDHVSHGAELQGQDILHANEAAANVPGD.

Belongs to the MCU (TC 1.A.77) family. In terms of assembly, homotetramer, assembles in a dimer or dimers configuration with two interfaces.

The protein resides in the mitochondrion inner membrane. The enzyme catalyses Ca(2+)(in) = Ca(2+)(out). Its activity is regulated as follows. Inhibited by ruthenium red or its derivative Ru360. In terms of biological role, highly selective calcium channel localized to the inner mitochondrial membrane, which mediates calcium uptake into the mitochondrial matrix. Mitochondrial calcium homeostasis plays key roles in cellular physiology and regulates ATP production, cytoplasmic calcium signals and activation of cell death pathways. Sufficient to operate as a pore-forming channel without the need of calcium-sensor or auxiliary subunit. This Metarhizium acridum (strain CQMa 102) protein is Calcium uniporter protein, mitochondrial.